Consider the following 401-residue polypeptide: Mannonate dehydratase (401 aa).

This sequence belongs to the mannonate dehydratase family. Requires Fe(2+) as cofactor. Mn(2+) serves as cofactor.

The catalysed reaction is D-mannonate = 2-dehydro-3-deoxy-D-gluconate + H2O. It participates in carbohydrate metabolism; pentose and glucuronate interconversion. Catalyzes the dehydration of D-mannonate. The protein is Mannonate dehydratase of Brucella melitensis biotype 2 (strain ATCC 23457).